A 162-amino-acid chain; its full sequence is uncharacterized protein (162 aa).

One can recognise an HTH asnC-type domain in the interval 6–99; that stretch reads LDDLDRAILK…YVTKTLSGFP (94 aa). Positions 25 to 44 form a DNA-binding region, H-T-H motif; sequence IAEISNQLKKPESTVHFRIK.

This is an uncharacterized protein from Pyrococcus horikoshii (strain ATCC 700860 / DSM 12428 / JCM 9974 / NBRC 100139 / OT-3).